A 518-amino-acid chain; its full sequence is Cyclin-L2 (518 aa).

Cyclin-like stretches follow at residues 81 to 183 and 196 to 280; these read ELIQ…RVLK and KIIV…KILQ. The interval 310 to 518 is disordered; that stretch reads AKGLLPGTAP…DHPGHSRHRR (209 aa). Serine 328, serine 335, serine 345, serine 348, and serine 366 each carry phosphoserine. Positions 382–420 are RS; it reads RSREQSYSRSPSRSASPKRRKSDSGSTSGGSKSQSRSRS. Residues 405–427 show a composition bias toward low complexity; that stretch reads SGSTSGGSKSQSRSRSRSDSPPR. The segment covering 438 to 450 has biased composition (basic and acidic residues); the sequence is SEVRGSRKSKDCK. The span at 455–469 shows a compositional bias: basic residues; it reads KPHKSRSRSSSRSRS. Composition is skewed to basic and acidic residues over residues 470 to 479 and 487 to 512; these read RSRERTDNSG and YYRD…DHPG.

This sequence belongs to the cyclin family. Cyclin L subfamily. Interacts with CDK11A, CDK11B, CDK12, CDK13 and POLR2A, the hyperphosphorylated C-terminal domain (CTD) of RNA polymerase II. May form a ternary complex with CDK11B and casein kinase II (CKII). Interacts with pre-mRNA-splicing factors, including at least SRSF1, SRSF2 and SRSF7/SLU7. Widely expressed (at protein level).

The protein resides in the nucleus speckle. It localises to the nucleus. Its subcellular location is the nucleoplasm. In terms of biological role, involved in pre-mRNA splicing. May induce cell death, possibly by acting on the transcription and RNA processing of apoptosis-related factors. This is Cyclin-L2 (Ccnl2) from Mus musculus (Mouse).